The sequence spans 259 residues: Dihydroorotate dehydrogenase B (NAD(+)), electron transfer subunit (259 aa).

The FAD-binding FR-type domain maps to 2–102 (MQKQNMIVVN…LGPLGHGFPV (101 aa)). FAD contacts are provided by residues 53–56 (RPIS), 70–72 (LYR), and 77–78 (GT). [2Fe-2S] cluster-binding residues include C221, C226, C229, and C246.

This sequence belongs to the PyrK family. In terms of assembly, heterotetramer of 2 PyrK and 2 PyrD type B subunits. [2Fe-2S] cluster serves as cofactor. FAD is required as a cofactor.

It functions in the pathway pyrimidine metabolism; UMP biosynthesis via de novo pathway; orotate from (S)-dihydroorotate (NAD(+) route): step 1/1. Functionally, responsible for channeling the electrons from the oxidation of dihydroorotate from the FMN redox center in the PyrD type B subunit to the ultimate electron acceptor NAD(+). The polypeptide is Dihydroorotate dehydrogenase B (NAD(+)), electron transfer subunit (Bacillus mycoides (strain KBAB4) (Bacillus weihenstephanensis)).